The sequence spans 461 residues: Glycine--tRNA ligase (461 aa).

Substrate-binding residues include arginine 100 and glutamate 163. Residues 195–197, 205–210, 282–283, and 326–329 each bind ATP; these read RNE, FRTREF, EL, and GLGR. Residue 210–214 participates in substrate binding; that stretch reads FEQME. 322 to 326 contacts substrate; sequence EPAAG.

Belongs to the class-II aminoacyl-tRNA synthetase family. As to quaternary structure, homodimer.

It is found in the cytoplasm. The catalysed reaction is tRNA(Gly) + glycine + ATP = glycyl-tRNA(Gly) + AMP + diphosphate. Its function is as follows. Catalyzes the attachment of glycine to tRNA(Gly). This Corynebacterium glutamicum (strain ATCC 13032 / DSM 20300 / JCM 1318 / BCRC 11384 / CCUG 27702 / LMG 3730 / NBRC 12168 / NCIMB 10025 / NRRL B-2784 / 534) protein is Glycine--tRNA ligase.